Consider the following 281-residue polypeptide: Elongation factor Ts (281 aa).

Residues 80 to 83 (TDFV) form an involved in Mg(2+) ion dislocation from EF-Tu region.

Belongs to the EF-Ts family.

The protein resides in the cytoplasm. In terms of biological role, associates with the EF-Tu.GDP complex and induces the exchange of GDP to GTP. It remains bound to the aminoacyl-tRNA.EF-Tu.GTP complex up to the GTP hydrolysis stage on the ribosome. The polypeptide is Elongation factor Ts (Vibrio atlanticus (strain LGP32) (Vibrio splendidus (strain Mel32))).